Here is an 87-residue protein sequence, read N- to C-terminus: HssA/B-like protein 55 (87 aa).

Residues 1–13 show a composition bias toward polar residues; that stretch reads MTILSAITSISRP. Residues 1 to 31 are disordered; it reads MTILSAITSISRPNKSSKSVVSSNGGSSLSM. The segment covering 14–31 has biased composition (low complexity); that stretch reads NKSSKSVVSSNGGSSLSM.

Belongs to the hssA/B family.

This chain is HssA/B-like protein 55 (hssl55), found in Dictyostelium discoideum (Social amoeba).